A 326-amino-acid chain; its full sequence is 2-dehydropantoate 2-reductase (326 aa).

NADP(+) is bound by residues 7-12 (GAGAIG) and N103. Residue N103 coordinates substrate. The active-site Proton donor is K205. N209, N213, and S274 together coordinate substrate. E286 lines the NADP(+) pocket.

It belongs to the ketopantoate reductase family.

Its subcellular location is the cytoplasm. It carries out the reaction (R)-pantoate + NADP(+) = 2-dehydropantoate + NADPH + H(+). It participates in cofactor biosynthesis; (R)-pantothenate biosynthesis; (R)-pantoate from 3-methyl-2-oxobutanoate: step 2/2. Functionally, catalyzes the NADPH-dependent reduction of ketopantoate into pantoic acid. The sequence is that of 2-dehydropantoate 2-reductase from Mesorhizobium japonicum (strain LMG 29417 / CECT 9101 / MAFF 303099) (Mesorhizobium loti (strain MAFF 303099)).